A 267-amino-acid chain; its full sequence is Hydroxyethylthiazole kinase (267 aa).

M49 serves as a coordination point for substrate. ATP contacts are provided by R124 and T170. Residue G197 coordinates substrate.

The protein belongs to the Thz kinase family. Requires Mg(2+) as cofactor.

It catalyses the reaction 5-(2-hydroxyethyl)-4-methylthiazole + ATP = 4-methyl-5-(2-phosphooxyethyl)-thiazole + ADP + H(+). It functions in the pathway cofactor biosynthesis; thiamine diphosphate biosynthesis; 4-methyl-5-(2-phosphoethyl)-thiazole from 5-(2-hydroxyethyl)-4-methylthiazole: step 1/1. In terms of biological role, catalyzes the phosphorylation of the hydroxyl group of 4-methyl-5-beta-hydroxyethylthiazole (THZ). The chain is Hydroxyethylthiazole kinase from Tolumonas auensis (strain DSM 9187 / NBRC 110442 / TA 4).